An 81-amino-acid chain; its full sequence is uncharacterized protein (81 aa).

Helical transmembrane passes span 4 to 24 (IFKM…FNYT) and 61 to 81 (NIYT…LHII).

Its subcellular location is the cell membrane. This is an uncharacterized protein from Bacillus subtilis (strain 168).